Here is a 575-residue protein sequence, read N- to C-terminus: Sulfite reductase [NADPH] hemoprotein beta-component (575 aa).

The [4Fe-4S] cluster site is built by Cys-439, Cys-445, Cys-484, and Cys-488. Cys-488 provides a ligand contact to siroheme.

The protein belongs to the nitrite and sulfite reductase 4Fe-4S domain family. As to quaternary structure, alpha(8)-beta(8). The alpha component is a flavoprotein, the beta component is a hemoprotein. The cofactor is siroheme. It depends on [4Fe-4S] cluster as a cofactor.

It carries out the reaction hydrogen sulfide + 3 NADP(+) + 3 H2O = sulfite + 3 NADPH + 4 H(+). The protein operates within sulfur metabolism; hydrogen sulfide biosynthesis; hydrogen sulfide from sulfite (NADPH route): step 1/1. Its function is as follows. Component of the sulfite reductase complex that catalyzes the 6-electron reduction of sulfite to sulfide. This is one of several activities required for the biosynthesis of L-cysteine from sulfate. This chain is Sulfite reductase [NADPH] hemoprotein beta-component, found in Blochmanniella pennsylvanica (strain BPEN).